The primary structure comprises 250 residues: N-acyl homoserine lactonase (250 aa).

Zn(2+) is bound by residues histidine 104, histidine 106, aspartate 108, histidine 109, histidine 169, aspartate 191, and histidine 235.

It belongs to the metallo-beta-lactamase superfamily. In terms of assembly, monomer. Zn(2+) serves as cofactor.

It carries out the reaction an N-acyl-L-homoserine lactone + H2O = an N-acyl-L-homoserine + H(+). Catalyzes hydrolysis of N-hexanoyl-(S)-homoserine lactone, but not the R-enantiomer. Hydrolyzes short- and long-chain N-acyl homoserine lactones with or without 3-oxo substitution at C3, has maximum activity on C10-AHL. This Bacillus thuringiensis subsp. indiana protein is N-acyl homoserine lactonase.